Here is a 175-residue protein sequence, read N- to C-terminus: Interleukin-10 (175 aa).

Residues 1–21 form the signal peptide; that stretch reads MQTCCQALLLLLAACTLPAHC. Intrachain disulfides connect Cys26–Cys123 and Cys77–Cys129.

It belongs to the IL-10 family. In terms of assembly, homodimer. Interacts with IL10RA and IL10RB. In terms of tissue distribution, expressed predominantly in bursa of Fabricius and cecal tonsils with low levels in thymus, liver and lung.

It localises to the secreted. In terms of biological role, major immune regulatory cytokine that acts on many cells of the immune system where it has profound anti-inflammatory functions, limiting excessive tissue disruption caused by inflammation. Mechanistically, IL10 binds to its heterotetrameric receptor comprising IL10RA and IL10RB leading to JAK1 and STAT2-mediated phosphorylation of STAT3. In turn, STAT3 translocates to the nucleus where it drives expression of anti-inflammatory mediators. Targets antigen-presenting cells (APCs) such as macrophages and monocytes and inhibits their release of pro-inflammatory cytokines including granulocyte-macrophage colony-stimulating factor /GM-CSF, granulocyte colony-stimulating factor/G-CSF, IL-1 alpha, IL-1 beta, IL-6, IL-8 and TNF-alpha. Also interferes with antigen presentation by reducing the expression of MHC-class II and co-stimulatory molecules, thereby inhibiting their ability to induce T cell activation. In addition, controls the inflammatory response of macrophages by reprogramming essential metabolic pathways including mTOR signaling. This is Interleukin-10 from Gallus gallus (Chicken).